The following is a 565-amino-acid chain: DNA ligase B (565 aa).

The N6-AMP-lysine intermediate role is filled by Lys130.

The protein belongs to the NAD-dependent DNA ligase family. LigB subfamily.

The enzyme catalyses NAD(+) + (deoxyribonucleotide)n-3'-hydroxyl + 5'-phospho-(deoxyribonucleotide)m = (deoxyribonucleotide)n+m + AMP + beta-nicotinamide D-nucleotide.. Its function is as follows. Catalyzes the formation of phosphodiester linkages between 5'-phosphoryl and 3'-hydroxyl groups in double-stranded DNA using NAD as a coenzyme and as the energy source for the reaction. The polypeptide is DNA ligase B (Yersinia enterocolitica serotype O:8 / biotype 1B (strain NCTC 13174 / 8081)).